The sequence spans 208 residues: Interleukin-6 (208 aa).

An N-terminal signal peptide occupies residues 1–29; sequence MNSRFTSAFTPFAVSLGLLLVMTSAFPTP. The N-linked (GlcNAc...) asparagine glycan is linked to Asn-38. The cysteines at positions 72 and 78 are disulfide-linked. Ser-81 carries the post-translational modification Phosphoserine. Residues Cys-101 and Cys-111 are joined by a disulfide bond.

Belongs to the IL-6 superfamily. As to quaternary structure, component of a hexamer of two molecules each of IL6, IL6R and IL6ST; first binds to IL6R to associate with the signaling subunit IL6ST. Interacts with IL6R (via the N-terminal ectodomain); this interaction may be affected by IL6R-binding with SORL1, hence decreasing IL6 cis signaling. Interacts with SORL1 (via the N-terminal ectodomain); this interaction leads to IL6 internalization and lysosomal degradation. May form a trimeric complex with the soluble SORL1 ectodomain and soluble IL6R receptor; this interaction might stabilize circulating IL6, hence promoting IL6 trans signaling.

It is found in the secreted. In terms of biological role, cytokine with a wide variety of biological functions in immunity, tissue regeneration, and metabolism. Binds to IL6R, then the complex associates to the signaling subunit IL6ST/gp130 to trigger the intracellular IL6-signaling pathway. The interaction with the membrane-bound IL6R and IL6ST stimulates 'classic signaling', whereas the binding of IL6 and soluble IL6R to IL6ST stimulates 'trans-signaling'. Alternatively, 'cluster signaling' occurs when membrane-bound IL6:IL6R complexes on transmitter cells activate IL6ST receptors on neighboring receiver cells. Its function is as follows. IL6 is a potent inducer of the acute phase response. Rapid production of IL6 contributes to host defense during infection and tissue injury, but excessive IL6 synthesis is involved in disease pathology. In the innate immune response, is synthesized by myeloid cells, such as macrophages and dendritic cells, upon recognition of pathogens through toll-like receptors (TLRs) at the site of infection or tissue injury. In the adaptive immune response, is required for the differentiation of B cells into immunoglobulin-secreting cells. Plays a major role in the differentiation of CD4(+) T cell subsets. Essential factor for the development of T follicular helper (Tfh) cells that are required for the induction of germinal-center formation. Required to drive naive CD4(+) T cells to the Th17 lineage. Also required for proliferation of myeloma cells and the survival of plasmablast cells. Acts as an essential factor in bone homeostasis and on vessels directly or indirectly by induction of VEGF, resulting in increased angiogenesis activity and vascular permeability. Induces, through 'trans-signaling' and synergistically with IL1B and TNF, the production of VEGF. Involved in metabolic controls, is discharged into the bloodstream after muscle contraction increasing lipolysis and improving insulin resistance. 'Trans-signaling' in central nervous system also regulates energy and glucose homeostasis. Mediates, through GLP-1, crosstalk between insulin-sensitive tissues, intestinal L cells and pancreatic islets to adapt to changes in insulin demand. Also acts as a myokine. Plays a protective role during liver injury, being required for maintenance of tissue regeneration. Also has a pivotal role in iron metabolism by regulating HAMP/hepcidin expression upon inflammation or bacterial infection. Through activation of IL6ST-YAP-NOTCH pathway, induces inflammation-induced epithelial regeneration. The sequence is that of Interleukin-6 (IL6) from Bos taurus (Bovine).